Here is a 177-residue protein sequence, read N- to C-terminus: Large ribosomal subunit protein uL6 (177 aa).

Over residues 152 to 171 (RPPEPYKGKGVRYDDEEVRR) the composition is skewed to basic and acidic residues. The segment at 152-177 (RPPEPYKGKGVRYDDEEVRRKEAKKK) is disordered.

The protein belongs to the universal ribosomal protein uL6 family. Part of the 50S ribosomal subunit.

Its function is as follows. This protein binds to the 23S rRNA, and is important in its secondary structure. It is located near the subunit interface in the base of the L7/L12 stalk, and near the tRNA binding site of the peptidyltransferase center. The polypeptide is Large ribosomal subunit protein uL6 (Shewanella sp. (strain ANA-3)).